The primary structure comprises 1017 residues: Adhesion G-protein coupled receptor G2 (1017 aa).

An N-terminal signal peptide occupies residues 1 to 37; that stretch reads MVFSVRQCGHVGRTEEVLLTFKIFLVIICLHVVLVTS. Over 38 to 627 the chain is Extracellular; it reads LEEDTDNSSL…TSVLPAQMMA (590 aa). Asn44, Asn85, Asn99, Asn111, Asn117, Asn144, Asn162, Asn186, and Asn194 each carry an N-linked (GlcNAc...) asparagine glycan. The segment at 301-366 is disordered; the sequence is PLSPQPSAPI…NTTSAPPVQT (66 aa). The segment covering 308 to 320 has biased composition (low complexity); it reads APIASSPAIDMPP. 2 stretches are compositionally biased toward polar residues: residues 321-335 and 344-366; these read QSETISSPMPQTHVS and SFSSPTVSAPANVNTTSAPPVQT. N-linked (GlcNAc...) asparagine glycans are attached at residues Asn357, Asn370, Asn435, Asn438, Asn456, Asn461, Asn528, Asn542, Asn547, Asn551, and Asn597. One can recognise a GAIN-B domain in the interval 462–619; sequence TTTFVAQDPA…GVLLDLSRTS (158 aa). 2 disulfides stabilise this stretch: Cys570/Cys601 and Cys589/Cys603. The GPS stretch occupies residues 570–619; it reads CVFWDLGRNGGRGGWSDNGCSVKDRRLNETICTCSHLTSFGVLLDLSRTS. The stachel stretch occupies residues 608 to 619; that stretch reads SFGVLLDLSRTS. The helical transmembrane segment at 628–648 threads the bilayer; the sequence is LTFITYIGCGLSSIFLSVTLV. The Cytoplasmic portion of the chain corresponds to 649 to 667; sequence TYIAFEKIRRDYPSKILIQ. Residues 668-688 form a helical membrane-spanning segment; sequence LCAALLLLNLVFLLDSWIALY. Residues 689–693 lie on the Extracellular side of the membrane; the sequence is KMQGL. A helical transmembrane segment spans residues 694–714; the sequence is CISVAVFLHYFLLVSFTWMGL. A disulfide bridge connects residues Cys694 and Cys778. The Cytoplasmic segment spans residues 715-737; it reads EAFHMYLALVKVFNTYIRKYILK. A helical membrane pass occupies residues 738 to 758; the sequence is FCIVGWGVPAVVVTIILTISP. At 759–789 the chain is on the extracellular side; it reads DNYGLGSYGKFPNGSPDDFCWINNNAVFYIT. The chain crosses the membrane as a helical span at residues 790 to 810; sequence VVGYFCVIFLLNVSMFIVVLV. Residues 811–834 are Cytoplasmic-facing; that stretch reads QLCRIKKKKQLGAQRKTSIQDLRS. The chain crosses the membrane as a helical span at residues 835–855; sequence IAGLTFLLGITWGFAFFAWGP. Residues 856–857 lie on the Extracellular side of the membrane; the sequence is VN. Asn857 carries N-linked (GlcNAc...) asparagine glycosylation. Residues 858–878 traverse the membrane as a helical segment; the sequence is VTFMYLFAIFNTLQGFFIFIF. Asn868 lines the 3beta-hydroxyandrost-5-en-17-one pocket. The Cytoplasmic segment spans residues 879–1017; it reads YCVAKENVRK…RGSLHFIEQM (139 aa). The disordered stretch occupies residues 918-939; that stretch reads QTVNQGVSSSSNSLQSSSNSTN. Ser1010 carries the post-translational modification Phosphoserine.

This sequence belongs to the G-protein coupled receptor 2 family. Adhesion G-protein coupled receptor (ADGR) subfamily. As to quaternary structure, heterodimer of 2 chains generated by proteolytic processing; the large extracellular N-terminal fragment and the membrane-bound C-terminal fragment predominantly remain associated and non-covalently linked. Interacts with CFTR. In terms of processing, proteolytically cleaved into 2 subunits, an extracellular subunit and a seven-transmembrane subunit. Highly glycosylated. Epididymis-specific expression (at protein level). Both subunits are associated with apical membranes of efferent ductule and proximal epididymal duct epithelia. Mainly expressed in the nonciliated principal cells of the proximal excurrent ducts. Specifically over-expressed in Ewing sarcomas but also up-regulated in a number of carcinomas derived from prostate, kidney or lung.

Its subcellular location is the apical cell membrane. Forms a heterodimer of 2 chains generated by proteolytic processing that remain associated through non-covalent interactions mediated by the GAIN-B domain. In the inactivated receptor, the Stachel sequence (also named stalk) is embedded in the GAIN-B domain, where it adopts a beta-strand conformation. On activation, the Stachel moves into the 7 transmembrane region and adopts a twisted hook-shaped configuration that forms contacts within the receptor, leading to coupling of a G-alpha protein, which activates signaling. The cleaved GAIN-B and N-terminal domains can then dissociate from the rest of the receptor. Deoxycorticosterone (DOC) acts as an antagonist of ADGRG2. In terms of biological role, adhesion G-protein coupled receptor (aGPCR) for steroid hormones, such as dehydroepiandrosterone (DHEA; also named 3beta-hydroxyandrost-5-en-17-one) and androstenedione. Involved in a signal transduction pathway controlling epididymal function and male fertility. Ligand binding causes a conformation change that triggers signaling via guanine nucleotide-binding proteins (G proteins) and modulates the activity of downstream effectors, such as adenylate cyclase. ADGRG2 is coupled to G(s) G proteins and mediates activation of adenylate cyclase activity. Also able to couple with G(q) G proteins in vitro. Together with CFTR, required to promote fluid reabsorption within efferent ductule. This chain is Adhesion G-protein coupled receptor G2, found in Homo sapiens (Human).